We begin with the raw amino-acid sequence, 520 residues long: Cytochrome b5 reductase 4 (520 aa).

N-acetylmethionine is present on Met-1. Residues 1 to 16 are compositionally biased toward low complexity; the sequence is MLNVPSQSFPGPSSQQ. Positions 1–27 are disordered; it reads MLNVPSQSFPGPSSQQRVASGGRSKVP. The Cytochrome b5 heme-binding domain occupies 54–130; sequence LIEVTEEELK…LKECLVGRMA (77 aa). 2 residues coordinate heme: His-89 and His-112. A CS domain is found at 164-255; that stretch reads PSSPSYDWFQ…KENTSWKCLG (92 aa). The 113-residue stretch at 272–384 folds into the FAD-binding FR-type domain; the sequence is LFYRKCQLVS…SNPEGNFIIS (113 aa). FAD is bound by residues 364-379 and 391-423; these read DQLQ…NPEG and DLFL…KVKL.

The protein belongs to the flavoprotein pyridine nucleotide cytochrome reductase family. FAD serves as cofactor.

It is found in the endoplasmic reticulum. It carries out the reaction 2 Fe(III)-[cytochrome b5] + NADH = 2 Fe(II)-[cytochrome b5] + NAD(+) + H(+). Functionally, NADH-cytochrome b5 reductase involved in endoplasmic reticulum stress response pathway. Plays a critical role in protecting pancreatic beta-cells against oxidant stress, possibly by protecting the cell from excess buildup of reactive oxygen species (ROS). This chain is Cytochrome b5 reductase 4 (CYB5R4), found in Bos taurus (Bovine).